Here is a 399-residue protein sequence, read N- to C-terminus: 1-deoxy-D-xylulose 5-phosphate reductoisomerase (399 aa).

5 residues coordinate NADPH: Thr13, Gly14, Ser15, Ile16, and Asn127. Lys128 lines the 1-deoxy-D-xylulose 5-phosphate pocket. An NADPH-binding site is contributed by Glu129. Asp153 lines the Mn(2+) pocket. 1-deoxy-D-xylulose 5-phosphate-binding residues include Ser154, Glu155, Ser187, and His210. A Mn(2+)-binding site is contributed by Glu155. Gly216 serves as a coordination point for NADPH. Residues Ser223, Asn228, Lys229, and Glu232 each contribute to the 1-deoxy-D-xylulose 5-phosphate site. Glu232 provides a ligand contact to Mn(2+).

Belongs to the DXR family. Requires Mg(2+) as cofactor. The cofactor is Mn(2+).

It carries out the reaction 2-C-methyl-D-erythritol 4-phosphate + NADP(+) = 1-deoxy-D-xylulose 5-phosphate + NADPH + H(+). It participates in isoprenoid biosynthesis; isopentenyl diphosphate biosynthesis via DXP pathway; isopentenyl diphosphate from 1-deoxy-D-xylulose 5-phosphate: step 1/6. Functionally, catalyzes the NADPH-dependent rearrangement and reduction of 1-deoxy-D-xylulose-5-phosphate (DXP) to 2-C-methyl-D-erythritol 4-phosphate (MEP). The polypeptide is 1-deoxy-D-xylulose 5-phosphate reductoisomerase (Bordetella avium (strain 197N)).